The primary structure comprises 357 residues: DNA replication and repair protein RecF (357 aa).

30–37 (GANGSGKT) lines the ATP pocket.

This sequence belongs to the RecF family.

It is found in the cytoplasm. Functionally, the RecF protein is involved in DNA metabolism; it is required for DNA replication and normal SOS inducibility. RecF binds preferentially to single-stranded, linear DNA. It also seems to bind ATP. The protein is DNA replication and repair protein RecF of Escherichia coli O139:H28 (strain E24377A / ETEC).